A 272-amino-acid polypeptide reads, in one-letter code: 3-methyl-2-oxobutanoate hydroxymethyltransferase (272 aa).

Mg(2+)-binding residues include Asp-50 and Asp-89. 3-methyl-2-oxobutanoate is bound by residues 50–51, Asp-89, and Lys-119; that span reads DS. Position 121 (Glu-121) interacts with Mg(2+). The Proton acceptor role is filled by Glu-188.

This sequence belongs to the PanB family. In terms of assembly, homodecamer; pentamer of dimers. Mg(2+) is required as a cofactor.

The protein resides in the cytoplasm. The catalysed reaction is 3-methyl-2-oxobutanoate + (6R)-5,10-methylene-5,6,7,8-tetrahydrofolate + H2O = 2-dehydropantoate + (6S)-5,6,7,8-tetrahydrofolate. It participates in cofactor biosynthesis; (R)-pantothenate biosynthesis; (R)-pantoate from 3-methyl-2-oxobutanoate: step 1/2. Functionally, catalyzes the reversible reaction in which hydroxymethyl group from 5,10-methylenetetrahydrofolate is transferred onto alpha-ketoisovalerate to form ketopantoate. The polypeptide is 3-methyl-2-oxobutanoate hydroxymethyltransferase (Methylobacterium radiotolerans (strain ATCC 27329 / DSM 1819 / JCM 2831 / NBRC 15690 / NCIMB 10815 / 0-1)).